A 1788-amino-acid chain; its full sequence is Glutamine and serine-rich protein 1 (1788 aa).

Positions 1-53 (MDAHYAPAGFAEPPAPPASAATQPAAPAWAYEARVPAAASSPSCSGSSPSLKA) are enriched in low complexity. Disordered regions lie at residues 1–69 (MDAH…DVLQ), 472–498 (TRDL…VSQT), and 532–617 (SYSS…SKQD). 4 stretches are compositionally biased toward polar residues: residues 60 to 69 (PSQSESDVLQ), 478 to 492 (VSES…SQGL), 532 to 569 (SYSS…SAQP), and 576 to 594 (VQSS…SSIP). Phosphoserine occurs at positions 670 and 940. The residue at position 1003 (Thr1003) is a Phosphothreonine. The residue at position 1041 (Ser1041) is a Phosphoserine. 2 disordered regions span residues 1104-1163 (QPGD…TDVY) and 1234-1264 (IQTT…VSLS). A Glycyl lysine isopeptide (Lys-Gly) (interchain with G-Cter in SUMO2) cross-link involves residue Lys1112. Positions 1126-1136 (PKEKAKGKEQG) are enriched in basic and acidic residues. Lys1137 is covalently cross-linked (Glycyl lysine isopeptide (Lys-Gly) (interchain with G-Cter in SUMO2)). Ser1262, Ser1281, and Ser1282 each carry phosphoserine. Phosphothreonine is present on Thr1394. At Ser1401 the chain carries Phosphoserine. Residues 1494–1588 (VCSKKPRNKP…DEGFEPPAPS (95 aa)) form a disordered region. A compositionally biased stretch (low complexity) spans 1510–1537 (IPSKPSSISKTSDPPVSKTTTTKTPSTK). A compositionally biased stretch (basic and acidic residues) spans 1545-1561 (IKAEPPPKKRKKWKEEF). A compositionally biased stretch (low complexity) spans 1562–1575 (SSSQSESSPEVRSS).

In terms of assembly, interacts with TET1.

It is found in the chromosome. Functionally, plays an essential role in the protection and maintenance of transcriptional and developmental programs. Protects many bivalent promoters and poised enhancers from hypermethylation, showing a marked preference for these regulatory elements over other types of promoters or enhancers. Mechanistically, cooperates with TET1 and binds to DNA in a common complex to inhibit the binding of DNMT3A/3B and therefore de novo methylation. This Mus musculus (Mouse) protein is Glutamine and serine-rich protein 1.